We begin with the raw amino-acid sequence, 381 residues long: Spermidine/putrescine import ATP-binding protein PotA (381 aa).

The region spanning 19–249 is the ABC transporter domain; the sequence is VELRKVFKVF…PESPFVADFI (231 aa). 51–58 is an ATP binding site; the sequence is GPSGCGKT.

It belongs to the ABC transporter superfamily. Spermidine/putrescine importer (TC 3.A.1.11.1) family. In terms of assembly, the complex is composed of two ATP-binding proteins (PotA), two transmembrane proteins (PotB and PotC) and a solute-binding protein (PotD).

Its subcellular location is the cell inner membrane. The catalysed reaction is ATP + H2O + polyamine-[polyamine-binding protein]Side 1 = ADP + phosphate + polyamineSide 2 + [polyamine-binding protein]Side 1.. Its function is as follows. Part of the ABC transporter complex PotABCD involved in spermidine/putrescine import. Responsible for energy coupling to the transport system. In Trichodesmium erythraeum (strain IMS101), this protein is Spermidine/putrescine import ATP-binding protein PotA.